The chain runs to 31 residues: Cytochrome b6-f complex subunit 6 (31 aa).

The helical transmembrane segment at 4–26 threads the bilayer; it reads LTSYFGFLLAALTITSALFIGLN.

It belongs to the PetL family. In terms of assembly, the 4 large subunits of the cytochrome b6-f complex are cytochrome b6, subunit IV (17 kDa polypeptide, PetD), cytochrome f and the Rieske protein, while the 4 small subunits are PetG, PetL, PetM and PetN. The complex functions as a dimer.

It is found in the plastid. The protein resides in the chloroplast thylakoid membrane. In terms of biological role, component of the cytochrome b6-f complex, which mediates electron transfer between photosystem II (PSII) and photosystem I (PSI), cyclic electron flow around PSI, and state transitions. PetL is important for photoautotrophic growth as well as for electron transfer efficiency and stability of the cytochrome b6-f complex. The chain is Cytochrome b6-f complex subunit 6 from Blitum bonus-henricus (Good King Henry).